Consider the following 720-residue polypeptide: Transcription factor bHLH155 (720 aa).

Over residues 522-534 (YPSSSSDQFQTSL) the composition is skewed to polar residues. The tract at residues 522-558 (YPSSSSDQFQTSLDIPKKNKKRAKPGESSRPRPRDRQ) is disordered. The Nuclear localization signal signature appears at 540 to 547 (NKKRAKPG). Residues 544-593 (AKPGESSRPRPRDRQLIQDRIKELRELVPNGSKCSIDSLLERTIKHMLFL) enclose the bHLH domain. The span at 545–558 (KPGESSRPRPRDRQ) shows a compositional bias: basic and acidic residues.

Belongs to the bHLH protein family. LHW subfamily. As to quaternary structure, homodimer.

The protein resides in the nucleus. Transcription factor that may regulate root development. The chain is Transcription factor bHLH155 (BHLH155) from Arabidopsis thaliana (Mouse-ear cress).